Here is a 328-residue protein sequence, read N- to C-terminus: Basic leucine zipper (bZIP) transcription factor atfB (328 aa).

The disordered stretch occupies residues 1 to 39; that stretch reads MLPEQSAFGRSAMPGSDAVNPGPSPFAPPPNSFSGDFLG. The segment covering 22–31 has biased composition (pro residues); the sequence is GPSPFAPPPN. A basic motif region spans residues 163-202; the sequence is KAKREKFLERNRLAASKCRQKKKEHTQLLESRYREQSDKK. Residues 163–226 form the bZIP domain; the sequence is KAKREKFLER…LGLKNEVLKH (64 aa). A leucine-zipper region spans residues 205 to 219; the sequence is LVSEIARLRSEILGL. The interval 250–313 is disordered; the sequence is TTAPDLTDVP…SEASVLTENS (64 aa). A compositionally biased stretch (polar residues) spans 262 to 277; the sequence is ASSSEGPMTPRPQQAL. Positions 283–305 are enriched in basic and acidic residues; the sequence is DPLHLEPSRADGSTDHSVRRDSE.

The protein belongs to the bZIP family. ATF subfamily.

The protein localises to the nucleus. Its function is as follows. Transcription factor that acts as a key player in the regulatory circuit that integrates secondary metabolism and cellular response to oxidative stress. Regulates the genes involved in development, as well as osmotic, oxidative, and cell wall stresses. Participates in the caspofungin paradoxical effect (CPE), where fungi grow beyond the minimum inhibitory concentration of caspofungin. Plays a role in virulence. The chain is Basic leucine zipper (bZIP) transcription factor atfB from Aspergillus fumigatus (strain ATCC MYA-4609 / CBS 101355 / FGSC A1100 / Af293) (Neosartorya fumigata).